We begin with the raw amino-acid sequence, 1058 residues long: Carbamoyl phosphate synthase large chain (1058 aa).

Positions methionine 1–glutamate 401 are carboxyphosphate synthetic domain. ATP is bound by residues arginine 129, arginine 169, glycine 175, glycine 176, arginine 208, isoleucine 210, glutamate 215, glycine 241, isoleucine 242, histidine 243, glutamine 284, and glutamate 298. Residues lysine 133 to valine 327 enclose the ATP-grasp 1 domain. Mg(2+)-binding residues include glutamine 284, glutamate 298, and asparagine 300. 3 residues coordinate Mn(2+): glutamine 284, glutamate 298, and asparagine 300. The tract at residues isoleucine 402–serine 546 is oligomerization domain. The interval isoleucine 547–tyrosine 929 is carbamoyl phosphate synthetic domain. The ATP-grasp 2 domain maps to glutamate 671 to leucine 861. Residues arginine 707, serine 746, isoleucine 748, glutamate 752, glycine 777, valine 778, histidine 779, serine 780, glutamine 820, and glutamate 832 each contribute to the ATP site. Residues glutamine 820, glutamate 832, and asparagine 834 each coordinate Mg(2+). Mn(2+) is bound by residues glutamine 820, glutamate 832, and asparagine 834. The MGS-like domain maps to leucine 930–isoleucine 1058. Residues leucine 930 to isoleucine 1058 are allosteric domain.

This sequence belongs to the CarB family. As to quaternary structure, composed of two chains; the small (or glutamine) chain promotes the hydrolysis of glutamine to ammonia, which is used by the large (or ammonia) chain to synthesize carbamoyl phosphate. Tetramer of heterodimers (alpha,beta)4. It depends on Mg(2+) as a cofactor. Mn(2+) is required as a cofactor.

It carries out the reaction hydrogencarbonate + L-glutamine + 2 ATP + H2O = carbamoyl phosphate + L-glutamate + 2 ADP + phosphate + 2 H(+). The catalysed reaction is hydrogencarbonate + NH4(+) + 2 ATP = carbamoyl phosphate + 2 ADP + phosphate + 2 H(+). It participates in amino-acid biosynthesis; L-arginine biosynthesis; carbamoyl phosphate from bicarbonate: step 1/1. It functions in the pathway pyrimidine metabolism; UMP biosynthesis via de novo pathway; (S)-dihydroorotate from bicarbonate: step 1/3. Functionally, large subunit of the glutamine-dependent carbamoyl phosphate synthetase (CPSase). CPSase catalyzes the formation of carbamoyl phosphate from the ammonia moiety of glutamine, carbonate, and phosphate donated by ATP, constituting the first step of 2 biosynthetic pathways, one leading to arginine and/or urea and the other to pyrimidine nucleotides. The large subunit (synthetase) binds the substrates ammonia (free or transferred from glutamine from the small subunit), hydrogencarbonate and ATP and carries out an ATP-coupled ligase reaction, activating hydrogencarbonate by forming carboxy phosphate which reacts with ammonia to form carbamoyl phosphate. This Streptococcus pneumoniae (strain JJA) protein is Carbamoyl phosphate synthase large chain.